The primary structure comprises 633 residues: Chaperone protein HtpG (633 aa).

Residues 1 to 341 are a; substrate-binding; it reads MSATSSKETL…SADLPLNVSR (341 aa). The segment at 342–558 is b; the sequence is EILQSSRDID…EGDMSANLER (217 aa). Residues 559 to 633 form a c region; sequence LLKAAGQAAP…LNGLLAMLPG (75 aa).

This sequence belongs to the heat shock protein 90 family. In terms of assembly, homodimer.

It is found in the cytoplasm. In terms of biological role, molecular chaperone. Has ATPase activity. The chain is Chaperone protein HtpG from Thiobacillus denitrificans (strain ATCC 25259 / T1).